We begin with the raw amino-acid sequence, 804 residues long: Endoplasmin (804 aa).

Positions 1-21 (MRALWVLGLCCVLLTFGSVRA) are cleaved as a signal peptide. An SRT pseudosubstrate motif motif is present at residues 42–44 (SRT). Asn62 is a glycosylation site (N-linked (GlcNAc...) asparagine). Ser64 is modified (phosphoserine). Asn107 carries N-linked (GlcNAc...) asparagine glycosylation. 3 residues coordinate ATP: Asn107, Asp149, and Asn162. N6-(2-hydroxyisobutyryl)lysine is present on Lys168. Ser172 is subject to Phosphoserine. Residue Phe199 coordinates ATP. A glycan (N-linked (GlcNAc...) asparagine) is linked at Asn217. A disordered region spans residues 288–323 (TVEEPMEEEEAAKEEKEESDDEAAVEEEEEEKKPKT). Residues 289–317 (VEEPMEEEEAAKEEKEESDDEAAVEEEEE) are compositionally biased toward acidic residues. A phosphoserine mark is found at Ser306 and Ser403. Lys404 carries the post-translational modification N6-succinyllysine. N-linked (GlcNAc...) asparagine glycosylation is present at Asn445. Residue Ser447 is modified to Phosphoserine. Residue Lys479 is modified to N6-acetyllysine. N-linked (GlcNAc...) asparagine glycans are attached at residues Asn481 and Asn502. Position 633 is an N6-succinyllysine (Lys633). Residues 750 to 804 (DPDAKVEEEPEEEPEETTEDTTEDTEQDEDEEMDVGTDEEEQETAKESTAEKDEL) are disordered. Over residues 757 to 791 (EEPEEEPEETTEDTTEDTEQDEDEEMDVGTDEEEQ) the composition is skewed to acidic residues. Thr786 carries the post-translational modification Phosphothreonine. The span at 792–804 (ETAKESTAEKDEL) shows a compositional bias: basic and acidic residues. The short motif at 801–804 (KDEL) is the Prevents secretion from ER element.

The protein belongs to the heat shock protein 90 family. In terms of assembly, homodimer; disulfide-linked. Component of an EIF2 complex at least composed of CELF1/CUGBP1, CALR, CALR3, EIF2S1, EIF2S2, HSP90B1 and HSPA5. Part of a large chaperone multiprotein complex comprising DNAJB11, HSP90B1, HSPA5, HYOU, PDIA2, PDIA4, PDIA6, PPIB, SDF2L1, UGGT1 and very small amounts of ERP29, but not, or at very low levels, CALR nor CANX. Interacts with AIMP1; regulates its retention in the endoplasmic reticulum. Hyperglycosylated form interacts with OS9; promoting its degradation by the endoplasmic reticulum associated degradation (ERAD). Interacts with CNPY3. This interaction is disrupted in the presence of ATP. Interacts with TLR4 and TLR9, but not with TLR3. Interacts with MZB1 in a calcium-dependent manner. Interacts with METTL23. Interacts with IL1B; the interaction facilitates cargo translocation into the ERGIC. Interacts with EIF2AK3. Phosphorylated by CK2. In terms of processing, N-glycosylated cotranslationally at Asn-217 by STT3A-containing OST-A complex: this glycosylation is constitutive. In response to various stress, 5 additional facultative sites (Asn-62, Asn-107, Asn-445, Asn-481 and Asn-502) can be glycosylated post-translationally by STT3B-containing OST-B complex, leading to a hyperglycosylated form that is degraded by the ER-associated degradation (ERAD) pathway. In normal conditions, the OST-A complex together with CCDC134 prevent glycosylation at facultative sites during protein folding, thereby preventing hyperglycosylation. Mechanistically, nascent HSP90B1 is tethered during translation to a specialized CCDC134-containing translocon that forms a microenvironment for its folding, in which STT3A associates with the SRT pseudosubstrate motif, and prevents access to facultative glycosylation sites until folding is completed, rendering its facultative sites inaccessible to the OST-B complex.

Its subcellular location is the endoplasmic reticulum lumen. It is found in the sarcoplasmic reticulum lumen. The protein localises to the melanosome. The enzyme catalyses ATP + H2O = ADP + phosphate + H(+). ATP-dependent chaperone involved in the processing of proteins in the endoplasmic reticulum, regulating their transport. Together with MESD, acts as a modulator of the Wnt pathway by promoting the folding of LRP6, a coreceptor of the canonical Wnt pathway. When associated with CNPY3, required for proper folding of Toll-like receptors. Promotes folding and trafficking of TLR4 to the cell surface. May participate in the unfolding of cytosolic leaderless cargos (lacking the secretion signal sequence) such as the interleukin 1/IL-1 to facilitate their translocation into the ERGIC (endoplasmic reticulum-Golgi intermediate compartment) and secretion; the translocation process is mediated by the cargo receptor TMED10. The polypeptide is Endoplasmin (HSP90B1) (Pongo abelii (Sumatran orangutan)).